The chain runs to 284 residues: Proteasome subunit beta (284 aa).

The propeptide at 1–56 (MSPMESSSTRFPGQALPAAYLTPGSSSFTDFLRVAAPELMPGSRPVPDGAVEAPHG) is removed in mature form; by autocatalysis. T57 acts as the Nucleophile in catalysis.

Belongs to the peptidase T1B family. In terms of assembly, the 20S proteasome core is composed of 14 alpha and 14 beta subunits that assemble into four stacked heptameric rings, resulting in a barrel-shaped structure. The two inner rings, each composed of seven catalytic beta subunits, are sandwiched by two outer rings, each composed of seven alpha subunits. The catalytic chamber with the active sites is on the inside of the barrel. Has a gated structure, the ends of the cylinder being occluded by the N-termini of the alpha-subunits. Is capped by the proteasome-associated ATPase, ARC.

The protein resides in the cytoplasm. The catalysed reaction is Cleavage of peptide bonds with very broad specificity.. The protein operates within protein degradation; proteasomal Pup-dependent pathway. With respect to regulation, the formation of the proteasomal ATPase ARC-20S proteasome complex, likely via the docking of the C-termini of ARC into the intersubunit pockets in the alpha-rings, may trigger opening of the gate for substrate entry. Interconversion between the open-gate and close-gate conformations leads to a dynamic regulation of the 20S proteasome proteolysis activity. Its function is as follows. Component of the proteasome core, a large protease complex with broad specificity involved in protein degradation. In Saccharopolyspora erythraea (strain ATCC 11635 / DSM 40517 / JCM 4748 / NBRC 13426 / NCIMB 8594 / NRRL 2338), this protein is Proteasome subunit beta.